An 880-amino-acid polypeptide reads, in one-letter code: Alanine--tRNA ligase (880 aa).

Zn(2+) is bound by residues His563, His567, Cys665, and His669.

This sequence belongs to the class-II aminoacyl-tRNA synthetase family. Zn(2+) serves as cofactor.

Its subcellular location is the cytoplasm. The enzyme catalyses tRNA(Ala) + L-alanine + ATP = L-alanyl-tRNA(Ala) + AMP + diphosphate. Functionally, catalyzes the attachment of alanine to tRNA(Ala) in a two-step reaction: alanine is first activated by ATP to form Ala-AMP and then transferred to the acceptor end of tRNA(Ala). Also edits incorrectly charged Ser-tRNA(Ala) and Gly-tRNA(Ala) via its editing domain. In Desulforudis audaxviator (strain MP104C), this protein is Alanine--tRNA ligase.